A 433-amino-acid chain; its full sequence is MMAVAEASQESLKQRLNVSGGNGLKGTLRVSGAKNSALVLMTASLLSEETIELTNIPSLTDIDGMSAILESLGVQVDRQSDCIRLTAAELSGSAPPYELVNSLRASFFSIGPLLGRLGHAQVPLPGGCRIGARPVVEHIRGLKALGAVVNVEHGIVTASVPGSKKRLTGAQIVLDCPSVGATETILMAAVLADGVSTIENAAQEPEVQDLANLLNSMGGQVSGAGGPLITVQGVERLRGCSNYPVIPDRIEAGTFLMAAAITRSPLVVEPVIPEHLSAVIQKLRDCGCSIQIKGRAVTITPGEITAVDITTQPFPGFPTDLQAPFMALMCTAKGTSVISEKIYENRLQHVAELQRMGASIRLEGSTAIVEGVAQLSAAPVTGTDLRAAAAMVLAGLSAKGITEVAGLKHLDRGYDDLEAKLSAAGAEVKRNIP.

Residue 34-35 participates in phosphoenolpyruvate binding; sequence KN. Arg-104 contributes to the UDP-N-acetyl-alpha-D-glucosamine binding site. Residue Cys-128 is the Proton donor of the active site. Cys-128 bears the 2-(S-cysteinyl)pyruvic acid O-phosphothioketal mark. 2 residues coordinate UDP-N-acetyl-alpha-D-glucosamine: Asp-320 and Ile-342.

Belongs to the EPSP synthase family. MurA subfamily.

The protein resides in the cytoplasm. The catalysed reaction is phosphoenolpyruvate + UDP-N-acetyl-alpha-D-glucosamine = UDP-N-acetyl-3-O-(1-carboxyvinyl)-alpha-D-glucosamine + phosphate. The protein operates within cell wall biogenesis; peptidoglycan biosynthesis. Cell wall formation. Adds enolpyruvyl to UDP-N-acetylglucosamine. The chain is UDP-N-acetylglucosamine 1-carboxyvinyltransferase from Synechococcus sp. (strain CC9605).